The primary structure comprises 65 residues: Large ribosomal subunit protein bL35 (65 aa).

It belongs to the bacterial ribosomal protein bL35 family.

The sequence is that of Large ribosomal subunit protein bL35 from Geobacter sp. (strain M21).